Reading from the N-terminus, the 313-residue chain is Putative zinc finger protein 077L (313 aa).

The C3H1-type zinc finger occupies 174–199 (CFSITKGIECPHYSCTYIHNYSQIEH). The segment at 294 to 313 (SDDSDSENNDEDDDWKIDLF) is disordered. The span at 296-313 (DSDSENNDEDDDWKIDLF) shows a compositional bias: acidic residues.

This sequence belongs to the IIV-6 077L family.

This chain is Putative zinc finger protein 077L, found in Invertebrate iridescent virus 6 (IIV-6).